The chain runs to 550 residues: Natural resistance-associated macrophage protein 1 (550 aa).

Residues 1-45 (MTGDKGPQRLSGSSYGSISSPTSPTSPGPQQAPPRETYLSEKIPI) are disordered. Residues 1–58 (MTGDKGPQRLSGSSYGSISSPTSPTSPGPQQAPPRETYLSEKIPIPDTKPGTFSLRKL) lie on the Cytoplasmic side of the membrane. Positions 11–23 (SGSSYGSISSPTS) are enriched in low complexity. A helical membrane pass occupies residues 59–76 (WAFTGPGFLMSIAFLDPG). Topologically, residues 77-85 (NIESDLQAG) are extracellular. Residues 86 to 105 (AVAGFKLLWVLLWATVLGLL) traverse the membrane as a helical segment. Over 106-142 (CQRLAARLGVVTGKDLGEVCHLYYPKVPRTVLWLTIE) the chain is Cytoplasmic. A helical transmembrane segment spans residues 143–163 (LAIVGSDMQEVIGTAIAFNLL). Residues 164 to 167 (SAGR) lie on the Extracellular side of the membrane. The chain crosses the membrane as a helical span at residues 168 to 187 (IPLWGGVLITIVDTFFFLFL). The Cytoplasmic segment spans residues 188–196 (DNYGLRKLE). A helical transmembrane segment spans residues 197–217 (AFFGLLITIMALTFGYEYVVA). The Extracellular segment spans residues 218-240 (RPEQGALLRGLFLPSCPGCGHPE). Residues 241-259 (LLQAVGIVGAIIMPHNIYL) form a helical membrane-spanning segment. Residues 260-287 (HSALVKSREIDRARRADIREANMYFLIE) are Cytoplasmic-facing. A helical transmembrane segment spans residues 288–307 (ATIALSVSFIINLFVMAVFG). The Extracellular segment spans residues 308–349 (QAFYQKTNQAAFNICANSSLHDYAKIFPMNNATVAVDIYQGG). Asn-324 and Asn-338 each carry an N-linked (GlcNAc...) asparagine glycan. The helical transmembrane segment at 350-369 (VILGCLFGPAALYIWAIGLL) threads the bilayer. At 370-400 (AAGQSSTMTGTYAGQFVMEGFLRLRWSRFAR) the chain is on the cytoplasmic side. A helical membrane pass occupies residues 401-418 (VLLTRSCAILPTVLVAVF). Residues 419-429 (RDLRDLSGLND) lie on the Extracellular side of the membrane. Residues 430–450 (LLNVLQSLLLPFAVLPILTFT) traverse the membrane as a helical segment. Over 451–466 (SMPTLMQEFANGLLNK) the chain is Cytoplasmic. The helical transmembrane segment at 467 to 488 (VVTSSIMVLVCAINLYFVVSYL) threads the bilayer. The Extracellular segment spans residues 489–496 (PSLPHPAY). The helical transmembrane segment at 497-516 (FGLAALLAAAYLGLSTYLVW) threads the bilayer. At 517–550 (TCCLAHGATFLAHSSHHHFLYGLLEEDQKGETSG) the chain is on the cytoplasmic side.

This sequence belongs to the NRAMP family. As to expression, macrophages; peripheral blood leukocytes, lung, spleen and liver.

Its subcellular location is the late endosome membrane. The protein localises to the lysosome membrane. The enzyme catalyses Zn(2+)(in) + H(+)(out) = Zn(2+)(out) + H(+)(in). It carries out the reaction Fe(2+)(in) + H(+)(out) = Fe(2+)(out) + H(+)(in). It catalyses the reaction Mn(2+)(in) + H(+)(out) = Mn(2+)(out) + H(+)(in). In terms of biological role, macrophage-specific antiporter that fluxes metal ions in either direction against a proton gradient. Localized to late endosomal lysosomal membranes, delivers bivalent cations from the cytosol into these acidic compartments where they may directly affect antimicrobial activity. Involved in iron metabolism and host natural resistance to infection with intracellular parasites. Pathogen resistance involves sequestration of Fe(2+) and Mn(2+), cofactors of both prokaryotic and eukaryotic catalases and superoxide dismutases, not only to protect the macrophage against its own generation of reactive oxygen species, but to deny the cations to the pathogen for synthesis of its protective enzymes. This Homo sapiens (Human) protein is Natural resistance-associated macrophage protein 1.